Reading from the N-terminus, the 544-residue chain is Chaperonin GroEL 1 (544 aa).

Residues threonine 30–proline 33, lysine 51, aspartate 87–threonine 91, glycine 415, asparagine 479–alanine 481, and aspartate 495 each bind ATP.

This sequence belongs to the chaperonin (HSP60) family. In terms of assembly, forms a cylinder of 14 subunits composed of two heptameric rings stacked back-to-back. Interacts with the co-chaperonin GroES.

Its subcellular location is the cytoplasm. The catalysed reaction is ATP + H2O + a folded polypeptide = ADP + phosphate + an unfolded polypeptide.. In terms of biological role, together with its co-chaperonin GroES, plays an essential role in assisting protein folding. The GroEL-GroES system forms a nano-cage that allows encapsulation of the non-native substrate proteins and provides a physical environment optimized to promote and accelerate protein folding. The chain is Chaperonin GroEL 1 from Vibrio cholerae serotype O1 (strain ATCC 39315 / El Tor Inaba N16961).